The chain runs to 350 residues: Protein FAM118B (350 aa).

Ala-2 bears the N-acetylalanine mark. The residue at position 9 (Ser-9) is a Phosphoserine. The interval 330-350 (AREGQLNGSSAAHGEIRGCST) is disordered.

This sequence belongs to the FAM118 family.

The protein resides in the nucleus. Its subcellular location is the cajal body. May play a role in Cajal bodies formation. This chain is Protein FAM118B (Fam118b), found in Rattus norvegicus (Rat).